The sequence spans 102 residues: Redox- and pH-responsive transcriptional regulator WhiB3 (102 aa).

The region spanning 22–86 (LCRGMDSSMF…GGLSESERDL (65 aa)) is the 4Fe-4S Wbl-type domain. [4Fe-4S] cluster is bound by residues Cys-23, Cys-53, Cys-56, and Cys-62.

This sequence belongs to the WhiB family. In terms of assembly, homodimer. Interacts with the C-terminal 54 residues of sigma factor SigA (RpoV). Requires [4Fe-4S] cluster as cofactor. Post-translationally, the 4Fe-4S cluster interacts with NO, forming a protein-bound dinitrosyliron dithiol complex. In terms of processing, the 4Fe-4S cluster interacts with O(2), leading to its degradation. Cluster loss takes about 2 hours. Once in the apo-form the cysteines oxidize to form 2 intramolecular disulfide bonds.

It is found in the cytoplasm. In terms of biological role, a redox-sensitive transcriptional regulator. Maintains intracellular redox homeostasis by regulating catabolic metabolism and polyketide biosynthesis. Regulates expression of the redox buffer ergothioneine (ERG) in a carbon-source-dependent manner; loss of ERG or mycothiol (MSH, the other major redox buffer in this bacteria) leads to respiratory alterations and bioenergetic deficiencies that negatively impact virulence. In response to low external pH (like that found in host macrophage phagosomes) alters endogenous gene expression leading to acid resistance; MSH and WhiB3 are probably part of a regulatory circuit that mediates gene expression upon acid stress. Regulates pathogenic lipid synthesis, coordinating proprionate flux (and other host-derived fatty acid oxidation intermediates) into methyl-branched fatty acids (polyacyltrehalose, phthiocerol dimycocerosates, sulfolipids) and the storage lipid triacylglycerol, functioning as reductive sink. During intracellular growth M.tuberculosis uses host fatty acids as an energy source, generating large quantities of proprionate and NADH/NADPH, which are toxic and highly reducing respectively. WhiB3 is thought to help dissipate proprionate and NADH/NADPH by switching to the in vivo carbon source and via lipid anabolism. Responds to NO and O(2). Regulates expression of genes encoding modular polyketide synthases such as pks2, pks3 and fbpA. The oxidized apo-form of WhiB3 binds DNA (with 2 intramolecular disulfide bonds); holo-WhiB3 (with the 4Fe-4S cluster) binds DNA considerably less well. Discriminates poorly between specific and non-specific DNA-binding. Plays a role in virulence and nutritional stress. In its apo-form can act as a protein disulfide reductase. Its function is as follows. May respond to mycothiol (MSH) redox potential (E-MSH) which decreases at pH 4.5 for up to 72 hours, indicative of cellular reductive stress; deletion of whiB3 leads to a lesser E-MSH at 72 hours, indicative of cellular oxidative stress. Probably via its effects on production of polyketide lipids, regulates host gene expression, leading to blockage of phagosome maturation. Equilibration of extra- and intracytoplasmic pH kills bacteria. This Mycobacterium tuberculosis (strain ATCC 25618 / H37Rv) protein is Redox- and pH-responsive transcriptional regulator WhiB3 (whiB3).